The sequence spans 108 residues: UPF0145 protein THA_1434 (108 aa).

It belongs to the UPF0145 family.

The chain is UPF0145 protein THA_1434 from Thermosipho africanus (strain TCF52B).